Consider the following 73-residue polypeptide: Sodium channel neurotoxin MeuNaTxalpha-13 (73 aa).

Residues 1–5 (TGVES) form the signal peptide. Residues 7-71 (RDAYIAKPHN…VPIRIPGKCH (65 aa)) enclose the LCN-type CS-alpha/beta domain. Disulfide bonds link Cys17/Cys70, Cys21/Cys43, Cys29/Cys53, and Cys33/Cys55. The propeptide at 72–73 (RR) is removed by a carboxypeptidase.

Belongs to the long (4 C-C) scorpion toxin superfamily. Sodium channel inhibitor family. Alpha subfamily. Expressed by the venom gland.

The protein resides in the secreted. In terms of biological role, alpha toxins bind voltage-independently at site-3 of sodium channels (Nav) and inhibit the inactivation of the activated channels, thereby blocking neuronal transmission. The sequence is that of Sodium channel neurotoxin MeuNaTxalpha-13 from Mesobuthus eupeus (Lesser Asian scorpion).